Consider the following 185-residue polypeptide: Lactoylglutathione lyase (185 aa).

A disordered region spans residues 1 to 21 (MASEAKESPANNPGLSTVRDE). The 148-residue stretch at 27 to 174 (IMQQTMFRVK…DGYWIEIFDL (148 aa)) folds into the VOC domain. Residues Gln30 and Arg34 each coordinate substrate. A Zn(2+)-binding site is contributed by Gln30. Residue Glu96 participates in Zn(2+) binding. Substrate is bound by residues Asn100, Arg120, His124, and 154-155 (KM). His124 is a binding site for Zn(2+). Glu170 lines the Zn(2+) pocket. Glu170 (proton donor/acceptor) is an active-site residue.

The protein belongs to the glyoxalase I family. The cofactor is Zn(2+).

The catalysed reaction is (R)-S-lactoylglutathione = methylglyoxal + glutathione. Its pathway is secondary metabolite metabolism; methylglyoxal degradation; (R)-lactate from methylglyoxal: step 1/2. Functionally, catalyzes the conversion of hemimercaptal, formed from methylglyoxal and glutathione, to S-lactoylglutathione. This chain is Lactoylglutathione lyase (GLY I), found in Brassica juncea (Indian mustard).